We begin with the raw amino-acid sequence, 106 residues long: Phosphoribosyl-ATP pyrophosphatase (106 aa).

It belongs to the PRA-PH family.

It is found in the cytoplasm. The catalysed reaction is 1-(5-phospho-beta-D-ribosyl)-ATP + H2O = 1-(5-phospho-beta-D-ribosyl)-5'-AMP + diphosphate + H(+). The protein operates within amino-acid biosynthesis; L-histidine biosynthesis; L-histidine from 5-phospho-alpha-D-ribose 1-diphosphate: step 2/9. The sequence is that of Phosphoribosyl-ATP pyrophosphatase from Rhizorhabdus wittichii (strain DSM 6014 / CCUG 31198 / JCM 15750 / NBRC 105917 / EY 4224 / RW1) (Sphingomonas wittichii).